A 682-amino-acid polypeptide reads, in one-letter code: Protein ACTIVITY OF BC1 COMPLEX KINASE 1, chloroplastic (682 aa).

Residues 1 to 79 (MESIHCNSLL…NSTDASVMTT (79 aa)) constitute a chloroplast transit peptide. The 332-residue stretch at 236-567 (KISSQTIAAA…IQVLFKDGVF (332 aa)) folds into the Protein kinase domain. Residues 242–250 (IAAASLGQV) and Lys-265 contribute to the ATP site. Asp-400 serves as the catalytic Proton acceptor.

It belongs to the protein kinase superfamily. ADCK protein kinase family. As to quaternary structure, interacts with ABC1K3 in plastoglobules (PG). Expressed in all tissues (e.g. especially in leaves) at all developmental stages from seed germination to flowering, except in the root tips.

It localises to the plastid. The protein localises to the chloroplast. Its subcellular location is the plastoglobule. It catalyses the reaction L-seryl-[protein] + ATP = O-phospho-L-seryl-[protein] + ADP + H(+). The catalysed reaction is L-threonyl-[protein] + ATP = O-phospho-L-threonyl-[protein] + ADP + H(+). Functionally, kinase that can phosphorylate the tocopherol cyclase VTE1, a key enzyme of tocopherol (vitamin E) metabolism and involved in the recycling of oxidated alpha-tocopherol quinone, possibly stabilizing it at plastoglobules. Also regulates plastoglobule protein composition. Prevents photodamage of chloroplasts under continuous red light, thus working in opposition to ABC1K3. Together with ABC1K1, contributes to plastoglobule (PG) function in prenyl-lipid metabolism, stress response, and thylakoid remodeling. Involved in chlorophyll degradation and in the maintenance of the number of chlorophyll-binding photosynthetic thylakoid membranes. Ensures photosynthetic electron transport by regulating the homeostasis of plastoquinone, beta-carotene and xanthophyll lutein, as well as membrane antioxidant tocopherol metabolism. Seems to affect specifically stability or turnover of D1 protein, product of psbA, one of the four core subunits of the photosystem II (PSII). Required for photooxidative stress responses, including the induction of oxidative stress response genes (e.g. FSD1, CSD1, CAT1, and UTG71C1), to prevent photosystem II core and chlorophyll degradations. This Arabidopsis thaliana (Mouse-ear cress) protein is Protein ACTIVITY OF BC1 COMPLEX KINASE 1, chloroplastic.